The primary structure comprises 379 residues: Cytochrome-c peroxidase IdrP1 (379 aa).

The signal sequence occupies residues 1 to 24; sequence MNNRKPLQLSLLVASLAVAFTASA. 2 consecutive Cytochrome c domains span residues 50 to 158 and 204 to 355; these read EKIA…DAFK and TSQK…EALS. 6 residues coordinate heme c: cysteine 72, cysteine 75, histidine 76, cysteine 219, cysteine 222, and histidine 223.

As to quaternary structure, the iodate reductase (Idr) complex is composed of a molybdopterin-dependent iodate reductase (IdrA and IdrB subunits) and two associated peroxidases (IdrP1 and IdrP2). Heme c is required as a cofactor.

The protein resides in the periplasm. The enzyme catalyses 2 Fe(II)-[cytochrome c] + H2O2 + 2 H(+) = 2 Fe(III)-[cytochrome c] + 2 H2O. Involved in iodate respiration. Probably reduces the H(2)O(2) produced by IdrA/IdrB to H(2)O, using a reduced cytochrome c as the electron donor. The sequence is that of Cytochrome-c peroxidase IdrP1 from Pseudomonas sp. (strain SCT).